A 163-amino-acid chain; its full sequence is Phosphopantetheine adenylyltransferase (163 aa).

Thr9 contributes to the substrate binding site. Residues 9-10 (TF) and His17 contribute to the ATP site. Substrate is bound by residues Lys41, Thr73, and Arg87. ATP-binding positions include 88 to 90 (GLR), Glu98, and 123 to 129 (FSFISSS).

The protein belongs to the bacterial CoaD family. In terms of assembly, homohexamer. Requires Mg(2+) as cofactor.

The protein localises to the cytoplasm. It catalyses the reaction (R)-4'-phosphopantetheine + ATP + H(+) = 3'-dephospho-CoA + diphosphate. Its pathway is cofactor biosynthesis; coenzyme A biosynthesis; CoA from (R)-pantothenate: step 4/5. Its function is as follows. Reversibly transfers an adenylyl group from ATP to 4'-phosphopantetheine, yielding dephospho-CoA (dPCoA) and pyrophosphate. This Desulfitobacterium hafniense (strain Y51) protein is Phosphopantetheine adenylyltransferase.